A 388-amino-acid chain; its full sequence is MSEQIVTPESSTPVVPNKETKINLLDLNRQQMREFFKNLGEKPFRADQVMKWMYHYCCDNFDEMTDINKVLRGKLKEVAEIRAPEVVEEQRSSDGTIKWAIAVGDQRVETVYIPEDDRATLCVSSQVGCALECKFCSTAQQGFNRNLRVSEIIGQVWRAAKIVGAAKVTGQRPITNVVMMGMGEPLLNLTNVVPAMEIMLDDFGFGLSKRRVTLSTSGVVPALDKLGDMIDVALAISLHAPNDTIRDEIVPINKKYNIETFLGAVRRYLEKSNANQGRVTIEYVMLDHVNDGTEHAHQLAELLKETPCKINLIPWNPFPGAPYGRSSNSRIDRFSKVLMSYGFTTIVRKTRGDDIDAACGQLAGDVIDRTKRTLRKRMQGEVIDIKAI.

Glu-109 serves as the catalytic Proton acceptor. Positions 115 to 354 (EDDRATLCVS…TIVRKTRGDD (240 aa)) constitute a Radical SAM core domain. Cysteines 122 and 359 form a disulfide. [4Fe-4S] cluster is bound by residues Cys-129, Cys-133, and Cys-136. S-adenosyl-L-methionine is bound by residues 183–184 (GE), Ser-215, 237–239 (SLH), and Asn-316. The active-site S-methylcysteine intermediate is the Cys-359.

The protein belongs to the radical SAM superfamily. RlmN family. [4Fe-4S] cluster is required as a cofactor.

Its subcellular location is the cytoplasm. It catalyses the reaction adenosine(2503) in 23S rRNA + 2 reduced [2Fe-2S]-[ferredoxin] + 2 S-adenosyl-L-methionine = 2-methyladenosine(2503) in 23S rRNA + 5'-deoxyadenosine + L-methionine + 2 oxidized [2Fe-2S]-[ferredoxin] + S-adenosyl-L-homocysteine. The catalysed reaction is adenosine(37) in tRNA + 2 reduced [2Fe-2S]-[ferredoxin] + 2 S-adenosyl-L-methionine = 2-methyladenosine(37) in tRNA + 5'-deoxyadenosine + L-methionine + 2 oxidized [2Fe-2S]-[ferredoxin] + S-adenosyl-L-homocysteine. Specifically methylates position 2 of adenine 2503 in 23S rRNA and position 2 of adenine 37 in tRNAs. m2A2503 modification seems to play a crucial role in the proofreading step occurring at the peptidyl transferase center and thus would serve to optimize ribosomal fidelity. This is Dual-specificity RNA methyltransferase RlmN from Salmonella typhimurium (strain LT2 / SGSC1412 / ATCC 700720).